The primary structure comprises 125 residues: Holo-[acyl-carrier-protein] synthase (125 aa).

Residues Asp8 and Glu57 each coordinate Mg(2+).

This sequence belongs to the P-Pant transferase superfamily. AcpS family. It depends on Mg(2+) as a cofactor.

It is found in the cytoplasm. It catalyses the reaction apo-[ACP] + CoA = holo-[ACP] + adenosine 3',5'-bisphosphate + H(+). Functionally, transfers the 4'-phosphopantetheine moiety from coenzyme A to a Ser of acyl-carrier-protein. In Azoarcus sp. (strain BH72), this protein is Holo-[acyl-carrier-protein] synthase.